Consider the following 418-residue polypeptide: Tyrosine--tRNA ligase 1 (418 aa).

Tyr-34 serves as a coordination point for L-tyrosine. The 'HIGH' region signature appears at Pro-39–His-48. L-tyrosine-binding residues include Tyr-169 and Gln-173. A 'KMSKS' region motif is present at residues Lys-230 to Thr-234. An ATP-binding site is contributed by Lys-233. In terms of domain architecture, S4 RNA-binding spans Thr-352–Tyr-418.

The protein belongs to the class-I aminoacyl-tRNA synthetase family. TyrS type 1 subfamily. Homodimer.

The protein resides in the cytoplasm. It catalyses the reaction tRNA(Tyr) + L-tyrosine + ATP = L-tyrosyl-tRNA(Tyr) + AMP + diphosphate + H(+). Its function is as follows. Catalyzes the attachment of tyrosine to tRNA(Tyr) in a two-step reaction: tyrosine is first activated by ATP to form Tyr-AMP and then transferred to the acceptor end of tRNA(Tyr). The polypeptide is Tyrosine--tRNA ligase 1 (Bacillus anthracis).